A 166-amino-acid chain; its full sequence is Early E3 18.5 kDa glycoprotein (166 aa).

The first 19 residues, 1-19 (MGPILVLLVLLSLLEPGSA), serve as a signal peptide directing secretion. Topologically, residues 20 to 131 (NYDPCLDFDP…SKDNIVTFSI (112 aa)) are lumenal. Asn-31 carries an N-linked (GlcNAc...) asparagine; by host glycan. Disulfide bonds link Cys-32–Cys-50 and Cys-44–Cys-106. Asn-63, Asn-67, and Asn-97 each carry an N-linked (GlcNAc...) asparagine; by host glycan. A helical membrane pass occupies residues 132-152 (AYCLCACLLTALLCVCIHLLV). Residues 153-166 (TTRIKNANNKEKMP) lie on the Cytoplasmic side of the membrane. The short motif at 162–166 (KEKMP) is the Di-lysine motif element.

The protein belongs to the adenoviridae E19 family. In terms of processing, both disulfide bonds are absolutely critical for the interaction with MHC antigens. N-glycosylated; high-mannose.

It localises to the host endoplasmic reticulum membrane. Binds and retains class I heavy chains in the endoplasmic reticulum during the early period of virus infection, thereby impairing their transport to the cell surface. Also delays the expression of class I alleles that it cannot affect by direct retention. Binds transporters associated with antigen processing (TAP) and acts as a tapasin inhibitor, preventing class I/TAP association. In consequence, infected cells are masked for immune recognition by cytotoxic T-lymphocytes. The sequence is that of Early E3 18.5 kDa glycoprotein from Human adenovirus B serotype 11 (strain Slobiski) (HAdV-11).